The primary structure comprises 134 residues: Small ribosomal subunit protein uS8c (134 aa).

The protein belongs to the universal ribosomal protein uS8 family. In terms of assembly, part of the 30S ribosomal subunit.

It is found in the plastid. The protein resides in the chloroplast. One of the primary rRNA binding proteins, it binds directly to 16S rRNA central domain where it helps coordinate assembly of the platform of the 30S subunit. This chain is Small ribosomal subunit protein uS8c (rps8), found in Bigelowiella natans (Pedinomonas minutissima).